A 281-amino-acid chain; its full sequence is Complement C1q tumor necrosis factor-related protein 1 (281 aa).

The signal sequence occupies residues 1-25 (MGSCAQGFMLGCCLLLAITWGPILS). A disordered region spans residues 35 to 68 (QEWEETEELPSPLDPVTRPEETREKYSPRQGEDL). Positions 51–66 (TRPEETREKYSPRQGE) are enriched in basic and acidic residues. N-linked (GlcNAc...) asparagine glycosylation is present at Asn-93. Residues 99–140 (GEKGDRGDRGLQGKYGKIGSTGPRGHVGPKGQKGSIGAPGNH) enclose the Collagen-like domain. The segment at 107 to 136 (RGLQGKYGKIGSTGPRGHVGPKGQKGSIGA) is disordered. The C1q domain maps to 141–281 (CKSQYAAFSV…GYLVKPASEP (141 aa)).

It is found in the secreted. The polypeptide is Complement C1q tumor necrosis factor-related protein 1 (C1qtnf1) (Mus musculus (Mouse)).